The sequence spans 432 residues: Adenylosuccinate synthetase (432 aa).

Residues 12–18 (GDEGKGK) and 40–42 (GHT) contribute to the GTP site. Asp-13 serves as the catalytic Proton acceptor. Mg(2+) contacts are provided by Asp-13 and Gly-40. Residues 13–16 (DEGK), 38–41 (NAGH), Thr-132, Arg-146, Gln-226, Thr-241, and Arg-305 contribute to the IMP site. Catalysis depends on His-41, which acts as the Proton donor. 301-307 (VVTGRKR) serves as a coordination point for substrate. Residues Arg-307, 333 to 335 (KLD), and 415 to 417 (STS) contribute to the GTP site.

The protein belongs to the adenylosuccinate synthetase family. In terms of assembly, homodimer. Mg(2+) serves as cofactor.

It is found in the cytoplasm. It catalyses the reaction IMP + L-aspartate + GTP = N(6)-(1,2-dicarboxyethyl)-AMP + GDP + phosphate + 2 H(+). The protein operates within purine metabolism; AMP biosynthesis via de novo pathway; AMP from IMP: step 1/2. Functionally, plays an important role in the de novo pathway of purine nucleotide biosynthesis. Catalyzes the first committed step in the biosynthesis of AMP from IMP. This chain is Adenylosuccinate synthetase, found in Rhizobium johnstonii (strain DSM 114642 / LMG 32736 / 3841) (Rhizobium leguminosarum bv. viciae).